The sequence spans 645 residues: MEQINIQFPDGNKKAFDKGTTTEDIAQSISPGLRKKAVAGKFNGQLVDLTKPLETDGSIEIVTPGSEEALEVLRHSTAHLMAHAIKRLYGNVKFGVGPVIEGGFYYDFDIDQNISSDDFEQIEKTMKQIVNENMKIERKVVSRDEVKELFSNDEYKLELIDAIPEDENVTLYSQGDFTDLCRGVHVPSTAKIKEFKLLSTAGAYWRGDSNNKMLQRIYGTAFFDKKELKAHLQMLEERKERDHRKIGKELELFTNSQLVGAGLPLWLPNGATIRREIERYIVDKEVSMGYDHVYTPVLANVDLYKTSGHWDHYQEDMFPPMQLDETESMVLRPMNCPHHMMIYANKPHSYRELPIRIAELGTMHRYEASGAVSGLQRVRGMTLNDSHIFVRPDQIKEEFKRVVNMIIDVYKDFGFEDYSFRLSYRDPEDKEKYFDDDDMWNKAENMLKEAADELGLSYEEAIGEAAFYGPKLDVQVKTAMGKEETLSTAQLDFLLPERFDLTYIGQDGEHHRPVVIHRGVVSTMERFVAFLTEETKGAFPTWLAPKQVQIIPVNVDLHYDYARQLQDELKSQGVRVSIDDRNEKMGYKIREAQMQKIPYQIVVGDKEVENNQVNVRQYGSQDQETVEKDEFIWNLVDEIRLKKHR.

One can recognise a TGS domain in the interval 1 to 63 (MEQINIQFPD…ETDGSIEIVT (63 aa)). The catalytic stretch occupies residues 242 to 540 (DHRKIGKELE…LTEETKGAFP (299 aa)). Positions 336, 387, and 517 each coordinate Zn(2+).

This sequence belongs to the class-II aminoacyl-tRNA synthetase family. As to quaternary structure, homodimer. It depends on Zn(2+) as a cofactor.

It is found in the cytoplasm. It carries out the reaction tRNA(Thr) + L-threonine + ATP = L-threonyl-tRNA(Thr) + AMP + diphosphate + H(+). Its function is as follows. Catalyzes the attachment of threonine to tRNA(Thr) in a two-step reaction: L-threonine is first activated by ATP to form Thr-AMP and then transferred to the acceptor end of tRNA(Thr). Also edits incorrectly charged L-seryl-tRNA(Thr). The chain is Threonine--tRNA ligase from Staphylococcus aureus (strain NCTC 8325 / PS 47).